An 801-amino-acid polypeptide reads, in one-letter code: uncharacterized protein (801 aa).

A PE domain is found at 1-93 (MSWVMVSPEL…GGAYAAAEAA (93 aa)).

It belongs to the mycobacterial PE family. PGRS subfamily.

This is an uncharacterized protein from Mycobacterium tuberculosis (strain ATCC 25618 / H37Rv).